A 302-amino-acid chain; its full sequence is 33 kDa chaperonin (302 aa).

2 disulfide bridges follow: Cys234-Cys236 and Cys267-Cys270.

Belongs to the HSP33 family. Under oxidizing conditions two disulfide bonds are formed involving the reactive cysteines. Under reducing conditions zinc is bound to the reactive cysteines and the protein is inactive.

Its subcellular location is the cytoplasm. Functionally, redox regulated molecular chaperone. Protects both thermally unfolding and oxidatively damaged proteins from irreversible aggregation. Plays an important role in the bacterial defense system toward oxidative stress. This is 33 kDa chaperonin from Neisseria meningitidis serogroup B (strain ATCC BAA-335 / MC58).